The following is a 511-amino-acid chain: Lariat debranching enzyme (511 aa).

Cys-52, His-54, Asp-83, and Asn-128 together coordinate a divalent metal cation. Residues 168-198 (SGIYSHGDVEFSHYERPAFAERDVKSAYHVR) are lariat recognition loop. Residues His-226, His-278, and His-280 each contribute to the a divalent metal cation site. The interval 473-511 (EDDFIIDRGHGSEEPEAKKSRLEEEKKKKKKKIENLKTL) is disordered. The span at 477 to 498 (IIDRGHGSEEPEAKKSRLEEEK) shows a compositional bias: basic and acidic residues.

The protein belongs to the lariat debranching enzyme family. Fe(2+) serves as cofactor. The cofactor is Zn(2+). Requires Mn(2+) as cofactor.

The protein localises to the nucleus. Active in presence of diverse metals including Fe(2+), Zn(2+), Mn(2+). Binds two metal cations in two adjacent alpha and beta metal-binding pockets. In terms of biological role, cleaves the 2'-5' phosphodiester linkage at the branch point of lariat intron pre-mRNAs after splicing and converts them into linear molecules that are subsequently degraded. It thereby facilitates ribonucleotide turnover. In Caenorhabditis briggsae, this protein is Lariat debranching enzyme (dbr-1).